Here is a 506-residue protein sequence, read N- to C-terminus: DEAD-box ATP-dependent RNA helicase CshA (506 aa).

The Q motif motif lies at 2–30 (QNFKELGISDNTVQSLESMGFKEPTPIQK). The region spanning 33–203 (IPYALQGIDI…QQFMKSPKII (171 aa)) is the Helicase ATP-binding domain. 46–53 (AQTGTGKT) contacts ATP. A DEAD box motif is present at residues 150–153 (DEAD). One can recognise a Helicase C-terminal domain in the interval 214 to 375 (QIEEFYTIVK…LRPPHRKEVL (162 aa)). The tract at residues 436 to 506 (EKPLSRKGRN…KGRTFADHQK (71 aa)) is disordered. Positions 468-480 (KRSKGYSSKKKST) are enriched in basic residues.

This sequence belongs to the DEAD box helicase family. CshA subfamily. As to quaternary structure, oligomerizes, may be a member of the RNA degradosome.

The protein localises to the cytoplasm. The catalysed reaction is ATP + H2O = ADP + phosphate + H(+). In terms of biological role, DEAD-box RNA helicase possibly involved in RNA degradation. Unwinds dsRNA in both 5'- and 3'-directions, has RNA-dependent ATPase activity. The chain is DEAD-box ATP-dependent RNA helicase CshA from Staphylococcus aureus (strain MRSA252).